Reading from the N-terminus, the 310-residue chain is tRNA dimethylallyltransferase (310 aa).

13–20 (GPTASGKT) contacts ATP. Residue 15–20 (TASGKT) participates in substrate binding. Interaction with substrate tRNA stretches follow at residues 38-41 (DSAL), 162-166 (QRLSR), 243-248 (RCVGYR), and 276-283 (KRQITWLR).

Belongs to the IPP transferase family. In terms of assembly, monomer. The cofactor is Mg(2+).

It carries out the reaction adenosine(37) in tRNA + dimethylallyl diphosphate = N(6)-dimethylallyladenosine(37) in tRNA + diphosphate. Catalyzes the transfer of a dimethylallyl group onto the adenine at position 37 in tRNAs that read codons beginning with uridine, leading to the formation of N6-(dimethylallyl)adenosine (i(6)A). The chain is tRNA dimethylallyltransferase from Aliivibrio fischeri (strain ATCC 700601 / ES114) (Vibrio fischeri).